A 118-amino-acid polypeptide reads, in one-letter code: MARIAGINIPDHKHAVIALTAIYGIGKTRSQAILAEVGIAEDVKISELNDEQIDILRDGVAKYTVEGDLRREVSMNIKRLMDLGCYRGLRHRRSLPLRGQRTKTNARTRKGPRKPIKK.

The disordered stretch occupies residues 94-118 (SLPLRGQRTKTNARTRKGPRKPIKK).

It belongs to the universal ribosomal protein uS13 family. Part of the 30S ribosomal subunit. Forms a loose heterodimer with protein S19. Forms two bridges to the 50S subunit in the 70S ribosome.

In terms of biological role, located at the top of the head of the 30S subunit, it contacts several helices of the 16S rRNA. In the 70S ribosome it contacts the 23S rRNA (bridge B1a) and protein L5 of the 50S subunit (bridge B1b), connecting the 2 subunits; these bridges are implicated in subunit movement. Contacts the tRNAs in the A and P-sites. The sequence is that of Small ribosomal subunit protein uS13 from Aliivibrio fischeri (strain ATCC 700601 / ES114) (Vibrio fischeri).